Consider the following 1037-residue polypeptide: Guanine nucleotide-binding protein G(s) subunit alpha isoforms XLas (1037 aa).

4 disordered regions span residues 1–105 (MGVR…MPFE), 185–224 (APGG…EETM), 283–588 (SPSQ…TSGC), and 640–666 (PLAE…KKRS). The segment covering 33-46 (APGAAAPGAGPSPA) has biased composition (low complexity). The segment covering 343-354 (PDKRERAERPPV) has biased composition (basic and acidic residues). 2 stretches are compositionally biased toward low complexity: residues 361 to 408 (MEGA…GATP) and 416 to 521 (APAD…PASG). A compositionally biased stretch (basic and acidic residues) spans 553-565 (GKSESSRGRRVYY). Acidic residues predominate over residues 572–583 (SDDDSSGDESDD). Basic and acidic residues predominate over residues 640–660 (PLAEKRRQMRKEALEKRAQKR). Residues 641–667 (LAEKRRQMRKEALEKRAQKRAEKKRSK) are a coiled coil. A G-alpha domain is found at 682 to 1037 (CTHRLLLLGA…RMHLRQYELL (356 aa)). The segment at 685-698 (RLLLLGAGESGKST) is G1 motif. GTP is bound at residue 690 to 698 (GAGESGKST). Ser-697 is a Mg(2+) binding site. Positions 711 to 734 (FNGEGGEEDPQAARSNSDGEKATK) are disordered. Positions 730-756 (EKATKVQDIKNNLKEAIETIVAAMSNL) form a coiled coil. The tract at residues 839–847 (DLLRCRVLT) is G2 motif. Residues 840–847 (LLRCRVLT), 866–870 (DVGGQ), and 935–938 (NKQD) contribute to the GTP site. Arg-844 is subject to ADP-ribosylarginine; by cholera toxin. A Mg(2+)-binding site is contributed by Thr-847. A G3 motif region spans residues 862 to 871 (FHMFDVGGQR). Positions 931-938 (ILFLNKQD) are G4 motif. A Phosphoserine modification is found at Ser-995. The segment at 1007 to 1012 (TCAVDT) is G5 motif. Position 1009 (Ala-1009) interacts with GTP.

The protein belongs to the G-alpha family. G(s) subfamily. As to quaternary structure, g proteins are composed of 3 units; alpha, beta and gamma. The alpha chain contains the guanine nucleotide binding site. Interacts through its N-terminal region with ALEX which is produced from the same locus in a different open reading frame. This interaction may inhibit its adenylyl cyclase-stimulating activity. Interacts with MAGED2.

It localises to the cell membrane. The protein resides in the apical cell membrane. It catalyses the reaction GTP + H2O = GDP + phosphate + H(+). In terms of biological role, guanine nucleotide-binding proteins (G proteins) function as transducers in numerous signaling pathways controlled by G protein-coupled receptors (GPCRs). The alpha chain contains the guanine nucleotide binding site and alternates between an active, GTP-bound state and an inactive, GDP-bound state. Signaling by an activated GPCR promotes GDP release and GTP binding. The alpha subunit has a low GTPase activity that converts bound GTP to GDP, thereby terminating the signal. Both GDP release and GTP hydrolysis are modulated by numerous regulatory proteins. Signaling involves the activation of adenylyl cyclases, resulting in increased levels of the signaling molecule cAMP. GNAS functions downstream of several GPCRs, including beta-adrenergic receptors. XLas isoforms interact with the same set of receptors as Gnas isoforms. The protein is Guanine nucleotide-binding protein G(s) subunit alpha isoforms XLas (GNAS) of Homo sapiens (Human).